The chain runs to 269 residues: Tryptophan synthase alpha chain (269 aa).

Residues E49 and D60 each act as proton acceptor in the active site.

Belongs to the TrpA family. In terms of assembly, tetramer of two alpha and two beta chains.

The enzyme catalyses (1S,2R)-1-C-(indol-3-yl)glycerol 3-phosphate + L-serine = D-glyceraldehyde 3-phosphate + L-tryptophan + H2O. It functions in the pathway amino-acid biosynthesis; L-tryptophan biosynthesis; L-tryptophan from chorismate: step 5/5. Functionally, the alpha subunit is responsible for the aldol cleavage of indoleglycerol phosphate to indole and glyceraldehyde 3-phosphate. The polypeptide is Tryptophan synthase alpha chain (Paramagnetospirillum magneticum (strain ATCC 700264 / AMB-1) (Magnetospirillum magneticum)).